A 1295-amino-acid chain; its full sequence is Phosphoribosylformylglycinamidine synthase (1295 aa).

A disordered region spans residues 305–327; the sequence is WPGAATGSGGEIRDEGATGRGAK. ATP-binding positions include 307 to 318 and alanine 678; that span reads GAATGSGGEIRD. Mg(2+) contacts are provided by glutamate 718, asparagine 722, and aspartate 884. Serine 886 contacts ATP. In terms of domain architecture, Glutamine amidotransferase type-1 spans 1042–1295; the sequence is VAVLREQGVN…IFRNARKQLG (254 aa). The active-site Nucleophile is the cysteine 1135. Active-site residues include histidine 1260 and glutamate 1262.

This sequence in the N-terminal section; belongs to the FGAMS family. Monomer.

It localises to the cytoplasm. The enzyme catalyses N(2)-formyl-N(1)-(5-phospho-beta-D-ribosyl)glycinamide + L-glutamine + ATP + H2O = 2-formamido-N(1)-(5-O-phospho-beta-D-ribosyl)acetamidine + L-glutamate + ADP + phosphate + H(+). It participates in purine metabolism; IMP biosynthesis via de novo pathway; 5-amino-1-(5-phospho-D-ribosyl)imidazole from N(2)-formyl-N(1)-(5-phospho-D-ribosyl)glycinamide: step 1/2. Phosphoribosylformylglycinamidine synthase involved in the purines biosynthetic pathway. Catalyzes the ATP-dependent conversion of formylglycinamide ribonucleotide (FGAR) and glutamine to yield formylglycinamidine ribonucleotide (FGAM) and glutamate. This chain is Phosphoribosylformylglycinamidine synthase, found in Escherichia coli (strain UTI89 / UPEC).